Consider the following 697-residue polypeptide: ATP-dependent zinc metalloprotease FtsH (697 aa).

The interval 1-23 (MSQNERDSLELERKNTPPDGPRL) is disordered. Topologically, residues 1 to 29 (MSQNERDSLELERKNTPPDGPRLPERRPR) are cytoplasmic. Residues 30–50 (FSVWIYLAIFLALLVHFFLFW) traverse the membrane as a helical segment. Residues 51–158 (TGTDTSTIEY…QFTARIEENW (108 aa)) are Periplasmic-facing. A helical transmembrane segment spans residues 159-179 (FGGLLTWIFPLILIVALWVFL). Residues 180–697 (LRRMSPSSQV…TERPESSSAP (518 aa)) are Cytoplasmic-facing. 251–258 (GPPGTGKT) contributes to the ATP binding site. Zn(2+) is bound at residue histidine 474. Glutamate 475 is a catalytic residue. Zn(2+) contacts are provided by histidine 478 and aspartate 550. The interval 649 to 697 (GPRPYGDYPSPNGKDVEELKDLQKGEPTSSSAVEAPAPQTERPESSSAP) is disordered. The span at 662–672 (KDVEELKDLQK) shows a compositional bias: basic and acidic residues.

This sequence in the central section; belongs to the AAA ATPase family. The protein in the C-terminal section; belongs to the peptidase M41 family. In terms of assembly, homohexamer. The cofactor is Zn(2+).

The protein localises to the cell inner membrane. Its function is as follows. Acts as a processive, ATP-dependent zinc metallopeptidase for both cytoplasmic and membrane proteins. Plays a role in the quality control of integral membrane proteins. This chain is ATP-dependent zinc metalloprotease FtsH, found in Rhodothermus marinus (strain ATCC 43812 / DSM 4252 / R-10) (Rhodothermus obamensis).